The sequence spans 182 residues: Small ribosomal subunit protein uS4c (182 aa).

Residues 82–143 (MRLDNILFRL…KERSKVLIQN (62 aa)) enclose the S4 RNA-binding domain.

Belongs to the universal ribosomal protein uS4 family. In terms of assembly, part of the 30S ribosomal subunit. Contacts protein S5. The interaction surface between S4 and S5 is involved in control of translational fidelity.

The protein resides in the plastid. It is found in the chloroplast. In terms of biological role, one of the primary rRNA binding proteins, it binds directly to 16S rRNA where it nucleates assembly of the body of the 30S subunit. Its function is as follows. With S5 and S12 plays an important role in translational accuracy. The sequence is that of Small ribosomal subunit protein uS4c (rps4) from Alophia veracruzana (Mexican pine woods lily).